Here is an 893-residue protein sequence, read N- to C-terminus: Alanine--tRNA ligase (893 aa).

The protein belongs to the class-II aminoacyl-tRNA synthetase family.

It localises to the cytoplasm. The catalysed reaction is tRNA(Ala) + L-alanine + ATP = L-alanyl-tRNA(Ala) + AMP + diphosphate. Catalyzes the attachment of alanine to tRNA(Ala) in a two-step reaction: alanine is first activated by ATP to form Ala-AMP and then transferred to the acceptor end of tRNA(Ala). Also edits incorrectly charged Ser-tRNA(Ala) and Gly-tRNA(Ala) via its editing domain. In Leuconostoc mesenteroides subsp. mesenteroides (strain ATCC 8293 / DSM 20343 / BCRC 11652 / CCM 1803 / JCM 6124 / NCDO 523 / NBRC 100496 / NCIMB 8023 / NCTC 12954 / NRRL B-1118 / 37Y), this protein is Alanine--tRNA ligase (alaS).